The chain runs to 333 residues: Atrochrysone carboxyl ACP thioesterase (333 aa).

The Zn(2+) site is built by histidine 104, histidine 106, aspartate 108, and histidine 109. Aspartate 108 functions as the Proton donor/acceptor in the catalytic mechanism.

This sequence belongs to the metallo-beta-lactamase superfamily. Zn(2+) serves as cofactor.

It catalyses the reaction atrochrysone carboxyl-[ACP] + H2O = atrochrysone carboxylate + holo-[ACP] + H(+). It participates in pigment biosynthesis. Atrochrysone carboxyl ACP thioesterase; part of the gene cluster that mediates the biosynthesis of the bianthraquinone cladofulvin, a conidial pigment not required for virulence but that plays a role in fitness and resistance to environmental stresses including UV light and low-temperature stress. The pathway begins with the synthesis of atrochrysone thioester by the polyketide synthase (PKS) claG. The atrochrysone carboxyl ACP thioesterase claF then breaks the thioester bond and releases the atrochrysone carboxylic acid from claG. This compound is decarboxylated by claH to yield emodin, which is further converted to chrysophanol hydroquinone by the reductase claC and the dehydratase claB. The cytochrome P450 monooxygenase claM then catalyzes the dimerization of nataloe-emodin to cladofulvin. The chain is Atrochrysone carboxyl ACP thioesterase from Passalora fulva (Tomato leaf mold).